The chain runs to 520 residues: Nucleobase-ascorbate transporter 1 (520 aa).

12 helical membrane-spanning segments follow: residues 36-56, 64-84, 86-106, 129-149, 150-170, 174-194, 213-233, 279-299, 362-382, 384-404, 415-435, and 453-473; these read YILM…AMGG, VIQT…LFGT, LPAV…IIND, ALIV…WGLF, SRFF…LGMF, FPQL…VIGL, FPIL…TASG, FAMM…YIAA, GFMI…SIPV, IYAA…LSFL, LMIT…FAQY, and AFLN…AVFM.

This sequence belongs to the nucleobase:cation symporter-2 (NCS2) (TC 2.A.40) family. As to expression, expressed in cotyledons 4 days after imbibition (DAI). Expressed in the minor and major veins of cotyledons and leaves, in the shoot apex and pedicels. Expressed in the root meristems, root tips and lateral root primordia.

It is found in the membrane. This is Nucleobase-ascorbate transporter 1 (NAT1) from Arabidopsis thaliana (Mouse-ear cress).